The primary structure comprises 1035 residues: Electrogenic sodium bicarbonate cotransporter 1 (1035 aa).

Topologically, residues Met1–Ser421 are cytoplasmic. Positions Ser192–Asp217 are enriched in polar residues. Disordered stretches follow at residues Ser192–Pro222 and Ile348–Glu389. Over residues Ala376–Glu389 the composition is skewed to basic and acidic residues. The chain crosses the membrane as a helical span at residues Ile422–Leu446. The Extracellular portion of the chain corresponds to Gly447–Val456. The helical transmembrane segment at Leu457–Gly475 threads the bilayer. Residue Gln476 is a topological domain, cytoplasmic. A discontinuously helical transmembrane segment spans residues Pro477–Phe497. Topologically, residues Ser498–Tyr505 are extracellular. A helical transmembrane segment spans residues Leu506–Thr526. The Cytoplasmic segment spans residues Asp527 to Glu540. Residues Glu541–Asp564 form a helical membrane-spanning segment. Topologically, residues Tyr565–Ile648 are extracellular. Residues Asn591, Asn596, Asn609, and Asn617 are each glycosylated (N-linked (GlcNAc...) asparagine). The chain crosses the membrane as a helical span at residues Thr649–Leu666. Residues Lys667–Lys681 are Cytoplasmic-facing. A helical membrane pass occupies residues Leu682–Leu701. The Extracellular portion of the chain corresponds to Leu702 to Trp735. The helical transmembrane segment at Val736–Asn763 threads the bilayer. The Cytoplasmic portion of the chain corresponds to Arg764–Tyr775. The helical transmembrane segment at His776–Met792 threads the bilayer. A topological domain (extracellular) is located at residue Ala793. The discontinuously helical transmembrane segment at Leu794–Leu811 threads the bilayer. Residues Lys812–Arg833 are Cytoplasmic-facing. The chain crosses the membrane as a helical span at residues Val834–Ala850. Topologically, residues Pro851–Pro857 are extracellular. The helical transmembrane segment at Met858–Asn874 threads the bilayer. The Cytoplasmic portion of the chain corresponds to Gly875–Cys916. The segment at residues Leu917–Val942 is an intramembrane region (discontinuously helical). Residues Arg943–Cys1035 are Cytoplasmic-facing. A disordered region spans residues Lys968 to Cys1035. The segment covering Ile1007–Cys1035 has biased composition (basic and acidic residues).

This sequence belongs to the anion exchanger (TC 2.A.31) family. As to quaternary structure, homodimer. As to expression, expressed in kidney and to a lower extent in bladder, brain, intestine, large intestine and eye.

It is found in the basolateral cell membrane. The protein resides in the cell membrane. It carries out the reaction 2 hydrogencarbonate(out) + Na(+)(out) = 2 hydrogencarbonate(in) + Na(+)(in). The catalysed reaction is 3 hydrogencarbonate(out) + Na(+)(out) = 3 hydrogencarbonate(in) + Na(+)(in). Functionally, electrogenic sodium/bicarbonate cotransporter with a Na(+):HCO3(-) stoichiometry varying from 1:2 to 1:3. May regulate bicarbonate influx/efflux at the basolateral membrane of cells and regulate intracellular pH. The polypeptide is Electrogenic sodium bicarbonate cotransporter 1 (SLC4A4) (Ambystoma tigrinum (Eastern tiger salamander)).